The sequence spans 802 residues: Lon protease (802 aa).

In terms of domain architecture, Lon N-terminal spans 17–209; the sequence is LPILPLNNVV…QVLSFLERER (193 aa). ATP is bound at residue 363–370; sequence GPPGVGKT. Residues 599–780 enclose the Lon proteolytic domain; that stretch reads EDEVGVVTGL…DEVLPRVLHP (182 aa). Catalysis depends on residues Ser686 and Lys729.

The protein belongs to the peptidase S16 family. As to quaternary structure, homohexamer. Organized in a ring with a central cavity.

It localises to the cytoplasm. It carries out the reaction Hydrolysis of proteins in presence of ATP.. Its function is as follows. ATP-dependent serine protease that mediates the selective degradation of mutant and abnormal proteins as well as certain short-lived regulatory proteins. Required for cellular homeostasis and for survival from DNA damage and developmental changes induced by stress. Degrades polypeptides processively to yield small peptide fragments that are 5 to 10 amino acids long. Binds to DNA in a double-stranded, site-specific manner. This chain is Lon protease, found in Roseiflexus castenholzii (strain DSM 13941 / HLO8).